A 411-amino-acid polypeptide reads, in one-letter code: Acetate kinase (411 aa).

Residue Asn-7 coordinates Mg(2+). Lys-14 contacts ATP. Residue Arg-94 coordinates substrate. Asp-151 serves as the catalytic Proton donor/acceptor. ATP is bound by residues 211 to 215, 285 to 287, and 333 to 337; these read HLGNG, DMR, and GIGEN. Glu-387 contributes to the Mg(2+) binding site.

The protein belongs to the acetokinase family. As to quaternary structure, homodimer. The cofactor is Mg(2+). Mn(2+) is required as a cofactor.

The protein localises to the cytoplasm. The catalysed reaction is acetate + ATP = acetyl phosphate + ADP. Its pathway is metabolic intermediate biosynthesis; acetyl-CoA biosynthesis; acetyl-CoA from acetate: step 1/2. In terms of biological role, catalyzes the formation of acetyl phosphate from acetate and ATP. Can also catalyze the reverse reaction. This Syntrophobacter fumaroxidans (strain DSM 10017 / MPOB) protein is Acetate kinase.